The following is a 60-amino-acid chain: MLLGTTSAQVVRPGSCPNVDVPIPPLGLCRTTCQTDANCQEGRKCCKNGCGFMTCETARF.

The signal sequence occupies residues 1–8 (MLLGTTSA). The WAP domain maps to 9–59 (QVVRPGSCPNVDVPIPPLGLCRTTCQTDANCQEGRKCCKNGCGFMTCETAR). 4 cysteine pairs are disulfide-bonded: Cys16–Cys46, Cys29–Cys50, Cys33–Cys45, and Cys39–Cys55.

Belongs to the venom waprin family. As to expression, expressed by the venom gland.

The protein localises to the secreted. In terms of biological role, damages membranes of susceptible bacteria. Has no hemolytic activity. Not toxic to mice. Does not inhibit the proteinases elastase and cathepsin G. The protein is Waprin-Lio1 of Erythrolamprus poecilogyrus (Water snake).